The sequence spans 834 residues: Leucine--tRNA ligase (834 aa).

The 'HIGH' region signature appears at 42 to 52 (PYPSGKLHMGH). Positions 619–623 (KMSKS) match the 'KMSKS' region motif. K622 lines the ATP pocket.

The protein belongs to the class-I aminoacyl-tRNA synthetase family.

It is found in the cytoplasm. The enzyme catalyses tRNA(Leu) + L-leucine + ATP = L-leucyl-tRNA(Leu) + AMP + diphosphate. The chain is Leucine--tRNA ligase from Actinobacillus pleuropneumoniae serotype 7 (strain AP76).